A 517-amino-acid polypeptide reads, in one-letter code: Maturase K (517 aa).

The protein belongs to the intron maturase 2 family. MatK subfamily.

It is found in the plastid. The protein resides in the chloroplast. Functionally, usually encoded in the trnK tRNA gene intron. Probably assists in splicing its own and other chloroplast group II introns. This is Maturase K from Acer pseudoplatanus (Sycamore maple).